The primary structure comprises 87 residues: Small ribosomal subunit protein bS20 (87 aa).

The segment at 1–28 (MANIKSQQKRNRTNERARLRNKSVKSSL) is disordered.

This sequence belongs to the bacterial ribosomal protein bS20 family.

In terms of biological role, binds directly to 16S ribosomal RNA. In Mycobacterium marinum (strain ATCC BAA-535 / M), this protein is Small ribosomal subunit protein bS20.